A 511-amino-acid chain; its full sequence is Glucans biosynthesis protein G (511 aa).

The signal sequence occupies residues Met1–Ala22.

Belongs to the OpgD/OpgG family.

It localises to the periplasm. It participates in glycan metabolism; osmoregulated periplasmic glucan (OPG) biosynthesis. Involved in the biosynthesis of osmoregulated periplasmic glucans (OPGs). The polypeptide is Glucans biosynthesis protein G (Escherichia fergusonii (strain ATCC 35469 / DSM 13698 / CCUG 18766 / IAM 14443 / JCM 21226 / LMG 7866 / NBRC 102419 / NCTC 12128 / CDC 0568-73)).